Reading from the N-terminus, the 246-residue chain is Protein phosphatase PhpP (246 aa).

Residues 2–240 (EISLLTDVGQ…DNITVALVSM (239 aa)) enclose the PPM-type phosphatase domain. Mn(2+) contacts are provided by Asp-36, Gly-37, Asp-192, and Asp-231.

The protein belongs to the PP2C family. As to quaternary structure, interacts with the kinase domain of StkP. The cofactor is Mn(2+).

The protein localises to the cytoplasm. The catalysed reaction is O-phospho-L-seryl-[protein] + H2O = L-seryl-[protein] + phosphate. The enzyme catalyses O-phospho-L-threonyl-[protein] + H2O = L-threonyl-[protein] + phosphate. Its activity is regulated as follows. Phosphatase activity is inhibited by NaF but not by okadaic acid. In terms of biological role, protein phosphatase able to dephosphorylate StkP-P and a phosphothreonine residue in a phosphopeptide synthetic substrate. PhpP and its cognate protein kinase StkP appear to constitute a functional signaling couple in vivo, PhpP's primary role probably being to control phosphorylation levels of StkP and of its targets (which include LocZ, DivIVA and KhpB (also called EloR/Jag)). PhpP thus performs an essential control of StkP activity. Overexpression confers an stkP deletion-like phenotype. The sequence is that of Protein phosphatase PhpP (phpP) from Streptococcus pneumoniae.